The chain runs to 686 residues: Disintegrin and metalloproteinase domain-containing protein 17 homolog (686 aa).

Residues 1 to 21 form the signal peptide; that stretch reads MKIQDRSLLIFLVLGILKSDA. The propeptide occupies 22–177; that stretch reads FNTRVKRHAP…RRAIAIPSDR (156 aa). Asn59, Asn206, and Asn262 each carry an N-linked (GlcNAc...) asparagine glycan. The Extracellular portion of the chain corresponds to 178–637; it reads RKDVLNVKRN…TGGVLEFIKT (460 aa). The Peptidase M12B domain maps to 187–445; it reads NRCTLKLVAD…KWESCFQEEM (259 aa). Intrachain disulfides connect Cys328/Cys440 and Cys394/Cys424. His370 lines the Zn(2+) pocket. Glu371 is an active-site residue. His374 and His380 together coordinate Zn(2+). The region spanning 446 to 535 is the Disintegrin domain; the sequence is TSFCGNGIVE…ECPSAPPVRD (90 aa). Asn501 is a glycosylation site (N-linked (GlcNAc...) asparagine). A disulfide bridge links Cys506 with Cys527. N-linked (GlcNAc...) asparagine glycosylation is present at Asn581. A helical membrane pass occupies residues 638–658; it reads HIVVIAIIFFTLIFVGIYKIV. At 659–686 the chain is on the cytoplasmic side; it reads KYGENFTEKVTHKTAGGCRSVFVKADVN.

Requires Zn(2+) as cofactor.

It is found in the cell membrane. Metalloprotease. Acts together with protease sup-17 to facilitate lin-12/Notch signaling during developmental cell fate decision, including anchor cell/ventral uterine precursor cell decision. By modulating glp-1/Notch signaling, plays a role in germline development. The protein is Disintegrin and metalloproteinase domain-containing protein 17 homolog of Caenorhabditis elegans.